Here is a 191-residue protein sequence, read N- to C-terminus: Putative manganese efflux pump MntP (191 aa).

The next 6 membrane-spanning stretches (helical) occupy residues 3–23, 37–57, 65–85, 107–129, 144–164, and 169–189; these read PISI…AAIG, LRAG…GWLL, VEAF…IHMI, WKLA…GLAF, CTLT…SMVG, and IIGG…HLHG.

The protein belongs to the MntP (TC 9.B.29) family.

The protein localises to the cell inner membrane. Probably functions as a manganese efflux pump. The chain is Putative manganese efflux pump MntP from Stenotrophomonas maltophilia (strain R551-3).